The chain runs to 652 residues: Threonine--tRNA ligase (652 aa).

The TGS domain maps to 1–64; the sequence is MPDVIRITFP…HEDGELVIIT (64 aa). Residues 245–542 form a catalytic region; it reads DHRKLGKELE…LIEEYKGAFP (298 aa). Residues C338, H389, and H519 each coordinate Zn(2+).

This sequence belongs to the class-II aminoacyl-tRNA synthetase family. Homodimer. Zn(2+) serves as cofactor.

It is found in the cytoplasm. It catalyses the reaction tRNA(Thr) + L-threonine + ATP = L-threonyl-tRNA(Thr) + AMP + diphosphate + H(+). Catalyzes the attachment of threonine to tRNA(Thr) in a two-step reaction: L-threonine is first activated by ATP to form Thr-AMP and then transferred to the acceptor end of tRNA(Thr). Also edits incorrectly charged L-seryl-tRNA(Thr). The chain is Threonine--tRNA ligase from Geobacillus kaustophilus (strain HTA426).